The sequence spans 561 residues: Putative cysteine ligase BshC (561 aa).

Positions Leu-472–Leu-517 form a coiled coil.

The protein belongs to the BshC family.

The chain is Putative cysteine ligase BshC from Chloroherpeton thalassium (strain ATCC 35110 / GB-78).